The chain runs to 151 residues: Nucleoside diphosphate kinase (151 aa).

Lys11, Phe59, Arg87, Thr93, Arg104, and Asn114 together coordinate ATP. His117 (pros-phosphohistidine intermediate) is an active-site residue.

It belongs to the NDK family. Homotetramer. Requires Mg(2+) as cofactor.

The protein resides in the cytoplasm. It catalyses the reaction a 2'-deoxyribonucleoside 5'-diphosphate + ATP = a 2'-deoxyribonucleoside 5'-triphosphate + ADP. The catalysed reaction is a ribonucleoside 5'-diphosphate + ATP = a ribonucleoside 5'-triphosphate + ADP. Major role in the synthesis of nucleoside triphosphates other than ATP. The ATP gamma phosphate is transferred to the NDP beta phosphate via a ping-pong mechanism, using a phosphorylated active-site intermediate. This chain is Nucleoside diphosphate kinase, found in Prochlorococcus marinus (strain MIT 9211).